Here is a 503-residue protein sequence, read N- to C-terminus: ATP synthase subunit alpha (503 aa).

Position 170–177 (G170–T177) interacts with ATP.

Belongs to the ATPase alpha/beta chains family. F-type ATPases have 2 components, CF(1) - the catalytic core - and CF(0) - the membrane proton channel. CF(1) has five subunits: alpha(3), beta(3), gamma(1), delta(1), epsilon(1). CF(0) has three main subunits: a(1), b(2) and c(9-12). The alpha and beta chains form an alternating ring which encloses part of the gamma chain. CF(1) is attached to CF(0) by a central stalk formed by the gamma and epsilon chains, while a peripheral stalk is formed by the delta and b chains.

Its subcellular location is the cell inner membrane. It catalyses the reaction ATP + H2O + 4 H(+)(in) = ADP + phosphate + 5 H(+)(out). Produces ATP from ADP in the presence of a proton gradient across the membrane. The alpha chain is a regulatory subunit. This Thermotoga neapolitana (strain ATCC 49049 / DSM 4359 / NBRC 107923 / NS-E) protein is ATP synthase subunit alpha.